The chain runs to 49 residues: Large ribosomal subunit protein bL33B (49 aa).

Belongs to the bacterial ribosomal protein bL33 family.

The sequence is that of Large ribosomal subunit protein bL33B from Oceanobacillus iheyensis (strain DSM 14371 / CIP 107618 / JCM 11309 / KCTC 3954 / HTE831).